Here is an 81-residue protein sequence, read N- to C-terminus: Putative membrane protein insertion efficiency factor (81 aa).

The tract at residues 61–81 (NPGGYDPVPPIPTSRSSSMAE) is disordered.

Belongs to the UPF0161 family.

The protein resides in the cell inner membrane. Functionally, could be involved in insertion of integral membrane proteins into the membrane. This chain is Putative membrane protein insertion efficiency factor, found in Pseudomonas fluorescens (strain Pf0-1).